A 186-amino-acid polypeptide reads, in one-letter code: Elongation factor P (186 aa).

This sequence belongs to the elongation factor P family.

The protein localises to the cytoplasm. It participates in protein biosynthesis; polypeptide chain elongation. Functionally, involved in peptide bond synthesis. Stimulates efficient translation and peptide-bond synthesis on native or reconstituted 70S ribosomes in vitro. Probably functions indirectly by altering the affinity of the ribosome for aminoacyl-tRNA, thus increasing their reactivity as acceptors for peptidyl transferase. The sequence is that of Elongation factor P from Shewanella piezotolerans (strain WP3 / JCM 13877).